Consider the following 404-residue polypeptide: Probable tRNA sulfurtransferase (404 aa).

Residues Q60 to T165 enclose the THUMP domain. ATP-binding positions include M183–L184, H208–F209, R265, G287, and Q296.

This sequence belongs to the ThiI family.

The protein localises to the cytoplasm. It carries out the reaction [ThiI sulfur-carrier protein]-S-sulfanyl-L-cysteine + a uridine in tRNA + 2 reduced [2Fe-2S]-[ferredoxin] + ATP + H(+) = [ThiI sulfur-carrier protein]-L-cysteine + a 4-thiouridine in tRNA + 2 oxidized [2Fe-2S]-[ferredoxin] + AMP + diphosphate. It catalyses the reaction [ThiS sulfur-carrier protein]-C-terminal Gly-Gly-AMP + S-sulfanyl-L-cysteinyl-[cysteine desulfurase] + AH2 = [ThiS sulfur-carrier protein]-C-terminal-Gly-aminoethanethioate + L-cysteinyl-[cysteine desulfurase] + A + AMP + 2 H(+). It functions in the pathway cofactor biosynthesis; thiamine diphosphate biosynthesis. Its function is as follows. Catalyzes the ATP-dependent transfer of a sulfur to tRNA to produce 4-thiouridine in position 8 of tRNAs, which functions as a near-UV photosensor. Also catalyzes the transfer of sulfur to the sulfur carrier protein ThiS, forming ThiS-thiocarboxylate. This is a step in the synthesis of thiazole, in the thiamine biosynthesis pathway. The sulfur is donated as persulfide by IscS. This Streptococcus sanguinis (strain SK36) protein is Probable tRNA sulfurtransferase.